A 491-amino-acid polypeptide reads, in one-letter code: Glutamate--tRNA ligase (491 aa).

The short motif at 13–23 (PSPTGFLHIGN) is the 'HIGH' region element. The Zn(2+) site is built by Cys110, Cys112, Cys137, and His139. The 'KMSKS' region motif lies at 254–258 (KLSKR). Residue Lys257 participates in ATP binding.

Belongs to the class-I aminoacyl-tRNA synthetase family. Glutamate--tRNA ligase type 1 subfamily. As to quaternary structure, monomer. Requires Zn(2+) as cofactor.

Its subcellular location is the cytoplasm. The catalysed reaction is tRNA(Glu) + L-glutamate + ATP = L-glutamyl-tRNA(Glu) + AMP + diphosphate. Its function is as follows. Catalyzes the attachment of glutamate to tRNA(Glu) in a two-step reaction: glutamate is first activated by ATP to form Glu-AMP and then transferred to the acceptor end of tRNA(Glu). The polypeptide is Glutamate--tRNA ligase (Listeria monocytogenes serovar 1/2a (strain ATCC BAA-679 / EGD-e)).